Consider the following 315-residue polypeptide: NAD kinase (315 aa).

Residue D91 is the Proton acceptor of the active site. NAD(+) is bound by residues 91–92, R96, 165–166, D195, and 206–211; these read DG, NE, and TAYAFS.

The protein belongs to the NAD kinase family. Requires a divalent metal cation as cofactor.

The protein resides in the cytoplasm. The enzyme catalyses NAD(+) + ATP = ADP + NADP(+) + H(+). Involved in the regulation of the intracellular balance of NAD and NADP, and is a key enzyme in the biosynthesis of NADP. Catalyzes specifically the phosphorylation on 2'-hydroxyl of the adenosine moiety of NAD to yield NADP. This Rhodococcus erythropolis (strain PR4 / NBRC 100887) protein is NAD kinase.